The following is a 219-amino-acid chain: MGYFITFEGIEGSGKTTQIGLLGEQLESLGYSVVMTREPGGCAISDKIRSILLDADNSSISPMTELLLYAAARAQHVSEVIIPALKQGNIVLCDRFSDATLAYQGSGRGIAREKVDTLNQLACQSLRPDLTVLIDCDVSVGLERARRRIETASGPREERFELEALEFHRSVREAYLELAHAEPQRFITVDGSGGVEEISEAIVAQVLQNRLNNTSHALL.

Residue 9 to 16 coordinates ATP; it reads GIEGSGKT.

Belongs to the thymidylate kinase family.

The enzyme catalyses dTMP + ATP = dTDP + ADP. Functionally, phosphorylation of dTMP to form dTDP in both de novo and salvage pathways of dTTP synthesis. The polypeptide is Thymidylate kinase (Pelobacter propionicus (strain DSM 2379 / NBRC 103807 / OttBd1)).